Here is a 311-residue protein sequence, read N- to C-terminus: Light-independent protochlorophyllide reductase iron-sulfur ATP-binding protein (311 aa).

ATP-binding positions include 10-15 (GIGKST) and lysine 39. A Mg(2+)-binding site is contributed by serine 14. [4Fe-4S] cluster-binding residues include cysteine 95 and cysteine 129. An ATP-binding site is contributed by 180–181 (NR).

The protein belongs to the NifH/BchL/ChlL family. Homodimer. Protochlorophyllide reductase is composed of three subunits; ChlL, ChlN and ChlB. It depends on [4Fe-4S] cluster as a cofactor.

Its subcellular location is the plastid. The protein localises to the chloroplast. It catalyses the reaction chlorophyllide a + oxidized 2[4Fe-4S]-[ferredoxin] + 2 ADP + 2 phosphate = protochlorophyllide a + reduced 2[4Fe-4S]-[ferredoxin] + 2 ATP + 2 H2O. It functions in the pathway porphyrin-containing compound metabolism; chlorophyll biosynthesis (light-independent). Functionally, component of the dark-operative protochlorophyllide reductase (DPOR) that uses Mg-ATP and reduced ferredoxin to reduce ring D of protochlorophyllide (Pchlide) to form chlorophyllide a (Chlide). This reaction is light-independent. The L component serves as a unique electron donor to the NB-component of the complex, and binds Mg-ATP. This Oltmannsiellopsis viridis (Marine flagellate) protein is Light-independent protochlorophyllide reductase iron-sulfur ATP-binding protein.